Consider the following 296-residue polypeptide: Transmembrane protein 156 (296 aa).

The Cytoplasmic segment spans residues 1–4 (MTKT). Residues 5–25 (ALLKLFVAIVITFILILPEYF) traverse the membrane as a helical segment. Residues 26 to 211 (KTPKERTLEL…EMDIKNITCS (186 aa)) lie on the Extracellular side of the membrane. N-linked (GlcNAc...) asparagine glycans are attached at residues Asn45 and Asn156. Residues 212-232 (MKITWYILVLLVFIFLIILTI) traverse the membrane as a helical segment. Over 233–296 (RKILEGQRRV…QEVLPPIPEL (64 aa)) the chain is Cytoplasmic.

It localises to the membrane. This Homo sapiens (Human) protein is Transmembrane protein 156 (TMEM156).